Here is a 75-residue protein sequence, read N- to C-terminus: Small ribosomal subunit protein bS18 (75 aa).

The protein belongs to the bacterial ribosomal protein bS18 family. In terms of assembly, part of the 30S ribosomal subunit. Forms a tight heterodimer with protein bS6.

Its function is as follows. Binds as a heterodimer with protein bS6 to the central domain of the 16S rRNA, where it helps stabilize the platform of the 30S subunit. The protein is Small ribosomal subunit protein bS18 of Shewanella denitrificans (strain OS217 / ATCC BAA-1090 / DSM 15013).